The following is a 369-amino-acid chain: UDP-3-O-(3-hydroxymyristoyl)glucosamine N-acyltransferase (369 aa).

H240 serves as the catalytic Proton acceptor.

It belongs to the transferase hexapeptide repeat family. LpxD subfamily. In terms of assembly, homotrimer.

It catalyses the reaction a UDP-3-O-[(3R)-3-hydroxyacyl]-alpha-D-glucosamine + a (3R)-hydroxyacyl-[ACP] = a UDP-2-N,3-O-bis[(3R)-3-hydroxyacyl]-alpha-D-glucosamine + holo-[ACP] + H(+). The catalysed reaction is UDP-3-O-[(3R)-3-hydroxytetradecanoyl]-alpha-D-glucosamine + (3R)-hydroxytetradecanoyl-[ACP] = UDP-2-N,3-O-bis[(3R)-3-hydroxytetradecanoyl]-alpha-D-glucosamine + holo-[ACP] + H(+). It participates in glycolipid biosynthesis; lipid IV(A) biosynthesis; lipid IV(A) from (3R)-3-hydroxytetradecanoyl-[acyl-carrier-protein] and UDP-N-acetyl-alpha-D-glucosamine: step 3/6. Functionally, catalyzes the N-acylation of UDP-3-O-(hydroxytetradecanoyl)glucosamine using 3-hydroxytetradecanoyl-ACP as the acyl donor. Is involved in the biosynthesis of lipid A, a phosphorylated glycolipid that anchors the lipopolysaccharide to the outer membrane of the cell. The polypeptide is UDP-3-O-(3-hydroxymyristoyl)glucosamine N-acyltransferase (Blochmanniella floridana).